Consider the following 204-residue polypeptide: Methylthioribulose-1-phosphate dehydratase (204 aa).

Histidine 94 and histidine 96 together coordinate Zn(2+).

This sequence belongs to the aldolase class II family. MtnB subfamily. Zn(2+) serves as cofactor.

It carries out the reaction 5-(methylsulfanyl)-D-ribulose 1-phosphate = 5-methylsulfanyl-2,3-dioxopentyl phosphate + H2O. Its pathway is amino-acid biosynthesis; L-methionine biosynthesis via salvage pathway; L-methionine from S-methyl-5-thio-alpha-D-ribose 1-phosphate: step 2/6. Catalyzes the dehydration of methylthioribulose-1-phosphate (MTRu-1-P) into 2,3-diketo-5-methylthiopentyl-1-phosphate (DK-MTP-1-P). The polypeptide is Methylthioribulose-1-phosphate dehydratase (Pseudomonas savastanoi pv. phaseolicola (strain 1448A / Race 6) (Pseudomonas syringae pv. phaseolicola (strain 1448A / Race 6))).